A 313-amino-acid chain; its full sequence is 4-diphosphocytidyl-2-C-methyl-D-erythritol kinase (313 aa).

Lys-11 is a catalytic residue. 99–109 (PVAAGLAGGST) contacts ATP. Residue Asp-141 is part of the active site.

This sequence belongs to the GHMP kinase family. IspE subfamily.

It carries out the reaction 4-CDP-2-C-methyl-D-erythritol + ATP = 4-CDP-2-C-methyl-D-erythritol 2-phosphate + ADP + H(+). It functions in the pathway isoprenoid biosynthesis; isopentenyl diphosphate biosynthesis via DXP pathway; isopentenyl diphosphate from 1-deoxy-D-xylulose 5-phosphate: step 3/6. Functionally, catalyzes the phosphorylation of the position 2 hydroxy group of 4-diphosphocytidyl-2C-methyl-D-erythritol. This Microcystis aeruginosa (strain NIES-843 / IAM M-2473) protein is 4-diphosphocytidyl-2-C-methyl-D-erythritol kinase.